The primary structure comprises 366 residues: Polyprenyl transferase ausN (366 aa).

The next 8 membrane-spanning stretches (helical) occupy residues Val-97 to Leu-117, Leu-121 to Ile-141, Leu-164 to Phe-184, Leu-215 to Pro-235, Ile-239 to Val-259, Leu-287 to Gly-307, Leu-308 to Leu-328, and Ser-346 to Val-366.

The protein belongs to the UbiA prenyltransferase family. Mg(2+) is required as a cofactor.

The protein resides in the membrane. It catalyses the reaction 3,5-dimethylorsellinate + (2E,6E)-farnesyl diphosphate = (3R)-3-farnesyl-6-hydroxy-2,3,5-trimethyl-4-oxocyclohexa-1,5-diene-1-carboxylate + diphosphate + H(+). It functions in the pathway secondary metabolite biosynthesis; terpenoid biosynthesis. Functionally, polyprenyl transferase; part of the gene cluster that mediates the biosynthesis of calidodehydroaustin, a fungal meroterpenoid. The first step of the pathway is the synthesis of 3,5-dimethylorsellinic acid by the polyketide synthase ausA. 3,5-dimethylorsellinic acid is then prenylated by the polyprenyl transferase ausN. Further epoxidation by the FAD-dependent monooxygenase ausM and cyclization by the probable terpene cyclase ausL lead to the formation of protoaustinoid A. Protoaustinoid A is then oxidized to spiro-lactone preaustinoid A3 by the combined action of the FAD-binding monooxygenases ausB and ausC, and the dioxygenase ausE. Acid-catalyzed keto-rearrangement and ring contraction of the tetraketide portion of preaustinoid A3 by ausJ lead to the formation of preaustinoid A4. The aldo-keto reductase ausK, with the help of ausH, is involved in the next step by transforming preaustinoid A4 into isoaustinone which is in turn hydroxylated by the P450 monooxygenase ausI to form austinolide. The cytochrome P450 monooxygenase ausG modifies austinolide to austinol. Austinol is further acetylated to austin by the O-acetyltransferase ausP, which spontaneously changes to dehydroaustin. The cytochrome P450 monooxygenase ausR then converts dehydroaustin is into 7-dehydrodehydroaustin. The hydroxylation catalyzed by ausR permits the O-acetyltransferase ausQ to add an additional acetyl group to the molecule, leading to the formation of acetoxydehydroaustin. The short chain dehydrogenase ausT catalyzes the reduction of the double bond present between carbon atoms 1 and 2 to convert 7-dehydrodehydroaustin into 1,2-dihydro-7-hydroxydehydroaustin. AusQ catalyzes not only an acetylation reaction but also the addition of the PKS ausV diketide product to 1,2-dihydro-7-hydroxydehydroaustin, forming precalidodehydroaustin. Finally, the iron/alpha-ketoglutarate-dependent dioxygenase converts precalidodehydroaustin into calidodehydroaustin. This chain is Polyprenyl transferase ausN, found in Aspergillus calidoustus.